Here is a 1342-residue protein sequence, read N- to C-terminus: ATP-dependent RNA helicase TDRD9 (1342 aa).

Over residues K31–Q63 the composition is skewed to basic and acidic residues. The segment at K31–L81 is disordered. The region spanning V99–N265 is the Helicase ATP-binding domain. G112 to T119 is a binding site for ATP. Residues D211–H214 carry the DEAH box motif. Residues S317 to G503 form the Helicase C-terminal domain. A Tudor domain is found at S901 to P962.

This sequence belongs to the DEAD box helicase family. DEAH subfamily.

The protein resides in the cytoplasm. It localises to the nucleus. It catalyses the reaction ATP + H2O = ADP + phosphate + H(+). ATP-binding RNA helicase which plays a central role during spermatogenesis by repressing transposable elements and preventing their mobilization, which is essential for the germline integrity. Acts via the piRNA metabolic process, which mediates the repression of transposable elements during meiosis by forming complexes composed of piRNAs and Piwi proteins and governs the methylation and subsequent repression of transposons. Acts downstream of piRNA biogenesis: exclusively required for transposon silencing in the nucleus, suggesting that it acts as a nuclear effector in the nucleus together with piwil4. In Danio rerio (Zebrafish), this protein is ATP-dependent RNA helicase TDRD9.